A 185-amino-acid chain; its full sequence is Large ribosomal subunit protein bL25 (185 aa).

Belongs to the bacterial ribosomal protein bL25 family. CTC subfamily. As to quaternary structure, part of the 50S ribosomal subunit; part of the 5S rRNA/L5/L18/L25 subcomplex. Contacts the 5S rRNA. Binds to the 5S rRNA independently of L5 and L18.

In terms of biological role, this is one of the proteins that binds to the 5S RNA in the ribosome where it forms part of the central protuberance. In Microcystis aeruginosa (strain NIES-843 / IAM M-2473), this protein is Large ribosomal subunit protein bL25.